The chain runs to 325 residues: Putative carboxypeptidase YocD (325 aa).

S111 (nucleophile) is an active-site residue. Residues E228 and H296 each act as charge relay system in the active site.

The protein belongs to the peptidase S66 family.

In Bacillus subtilis (strain 168), this protein is Putative carboxypeptidase YocD (yocD).